The chain runs to 301 residues: Acetylglutamate kinase (301 aa).

Substrate is bound by residues 68-69 (GG), Arg90, and Asn195.

It belongs to the acetylglutamate kinase family. ArgB subfamily.

The protein localises to the cytoplasm. The enzyme catalyses N-acetyl-L-glutamate + ATP = N-acetyl-L-glutamyl 5-phosphate + ADP. It participates in amino-acid biosynthesis; L-arginine biosynthesis; N(2)-acetyl-L-ornithine from L-glutamate: step 2/4. In terms of biological role, catalyzes the ATP-dependent phosphorylation of N-acetyl-L-glutamate. This chain is Acetylglutamate kinase, found in Pseudomonas putida (strain GB-1).